Consider the following 352-residue polypeptide: Selenide, water dikinase (352 aa).

Residue C23 is part of the active site. Residues K26 and S54–D56 contribute to the ATP site. Position 57 (D57) interacts with Mg(2+). Residues D74, D97, and G145–S147 contribute to the ATP site. D97 serves as a coordination point for Mg(2+). D233 lines the Mg(2+) pocket.

Belongs to the selenophosphate synthase 1 family. Class I subfamily. In terms of assembly, homodimer. Mg(2+) is required as a cofactor.

The enzyme catalyses hydrogenselenide + ATP + H2O = selenophosphate + AMP + phosphate + 2 H(+). Functionally, synthesizes selenophosphate from selenide and ATP. The chain is Selenide, water dikinase from Shewanella putrefaciens (strain CN-32 / ATCC BAA-453).